Consider the following 680-residue polypeptide: Probable galacturonosyltransferase 3 (680 aa).

Topologically, residues 1–6 (MTTFST) are cytoplasmic. Residues 7–27 (CAAFLSLVVVLHAVHVGGAIL) form a helical; Signal-anchor for type II membrane protein membrane-spanning segment. Residues 28 to 680 (ESQAPHRELK…PYLRRCDINE (653 aa)) lie on the Lumenal side of the membrane. The interval 118 to 146 (SFQNDTGMEDNASHSTTNQTDESENQFPN) is disordered. N121, N128, N135, N239, N386, N438, N545, N578, N610, and N631 each carry an N-linked (GlcNAc...) asparagine glycan. Over residues 130–145 (SHSTTNQTDESENQFP) the composition is skewed to polar residues.

It belongs to the glycosyltransferase 8 family. As to expression, expressed in roots, inflorescences, siliques, leaves and stems.

Its subcellular location is the golgi apparatus membrane. It functions in the pathway glycan metabolism; pectin biosynthesis. In terms of biological role, may be involved in pectin and/or xylans biosynthesis in cell walls. The chain is Probable galacturonosyltransferase 3 (GAUT3) from Arabidopsis thaliana (Mouse-ear cress).